Here is a 538-residue protein sequence, read N- to C-terminus: Thermosome subunit beta (538 aa).

The interval 518-538 (SSGSSEEGMEEMGGMGGMPPM) is disordered. The span at 528 to 538 (EMGGMGGMPPM) shows a compositional bias: gly residues.

It belongs to the TCP-1 chaperonin family. Forms a Heterooligomeric complex of two stacked eight-membered rings.

In terms of biological role, molecular chaperone; binds unfolded polypeptides in vitro, and has a weak ATPase activity. This Methanothermobacter thermautotrophicus (strain ATCC 29096 / DSM 1053 / JCM 10044 / NBRC 100330 / Delta H) (Methanobacterium thermoautotrophicum) protein is Thermosome subunit beta (thsB).